The chain runs to 197 residues: Transposon Tn552 resolvase (197 aa).

The Resolvase/invertase-type recombinase catalytic domain occupies 1–136 (MKIGYARVST…AGRIAARARG (136 aa)). S9 acts as the O-(5'-phospho-DNA)-serine intermediate in catalysis. Positions 163 to 182 (IKTIAEQWQVSRTTIYRYLN) form a DNA-binding region, H-T-H motif.

Belongs to the site-specific recombinase resolvase family.

In terms of biological role, resolvase catalyzes the resolution (a site-specific recombination) of the cointegrated replicon to yield the final transposition products. This chain is Transposon Tn552 resolvase (tnpR), found in Staphylococcus aureus.